Here is a 99-residue protein sequence, read N- to C-terminus: Small ribosomal subunit protein bS20 (99 aa).

The protein belongs to the bacterial ribosomal protein bS20 family.

Binds directly to 16S ribosomal RNA. In Thermotoga neapolitana (strain ATCC 49049 / DSM 4359 / NBRC 107923 / NS-E), this protein is Small ribosomal subunit protein bS20.